Consider the following 121-residue polypeptide: ATP synthase epsilon chain (121 aa).

It belongs to the ATPase epsilon chain family. In terms of assembly, F-type ATPases have 2 components, CF(1) - the catalytic core - and CF(0) - the membrane proton channel. CF(1) has five subunits: alpha(3), beta(3), gamma(1), delta(1), epsilon(1). CF(0) has three main subunits: a, b and c.

The protein resides in the cell membrane. In terms of biological role, produces ATP from ADP in the presence of a proton gradient across the membrane. The protein is ATP synthase epsilon chain of Mycolicibacterium vanbaalenii (strain DSM 7251 / JCM 13017 / BCRC 16820 / KCTC 9966 / NRRL B-24157 / PYR-1) (Mycobacterium vanbaalenii).